Consider the following 406-residue polypeptide: Propionate kinase (406 aa).

Residues asparagine 11 and lysine 18 each coordinate ATP. Asparagine 11 provides a ligand contact to Mg(2+). Arginine 86 provides a ligand contact to substrate. The active-site Proton donor/acceptor is aspartate 143. Residues histidine 175, 203–207 (HLGNG), 278–280 (DMR), and 326–330 (GIGEN) each bind ATP.

The protein belongs to the acetokinase family. TdcD subfamily. Homodimer. It depends on Mg(2+) as a cofactor.

The enzyme catalyses propanoate + ATP = propanoyl phosphate + ADP. It functions in the pathway amino-acid degradation; L-threonine degradation via propanoate pathway; propanoate from L-threonine: step 4/4. Catalyzes the conversion of propionyl phosphate and ADP to propionate and ATP. This Yersinia enterocolitica serotype O:8 / biotype 1B (strain NCTC 13174 / 8081) protein is Propionate kinase.